Reading from the N-terminus, the 200-residue chain is LexA repressor (200 aa).

The segment at residues 28–48 (RAEISNRLGFRSANAAEEHLK) is a DNA-binding region (H-T-H motif). Active-site for autocatalytic cleavage activity residues include Ser121 and Lys158.

Belongs to the peptidase S24 family. As to quaternary structure, homodimer.

It catalyses the reaction Hydrolysis of Ala-|-Gly bond in repressor LexA.. In terms of biological role, represses a number of genes involved in the response to DNA damage (SOS response), including recA and lexA. In the presence of single-stranded DNA, RecA interacts with LexA causing an autocatalytic cleavage which disrupts the DNA-binding part of LexA, leading to derepression of the SOS regulon and eventually DNA repair. The chain is LexA repressor from Hahella chejuensis (strain KCTC 2396).